We begin with the raw amino-acid sequence, 278 residues long: Coiled-coil domain-containing protein 106 (278 aa).

Residues 61–99 (AQLHLALERNSWLQKRIEDLEEERDFLRCQLDKFISSAR) adopt a coiled-coil conformation. Over residues 102–119 (ADDHCRGKPGPRRAEGDG) the composition is skewed to basic and acidic residues. Residues 102 to 174 (ADDHCRGKPG…KPKARERQRV (73 aa)) form a disordered region. Phosphoserine is present on Ser-128. Low complexity predominate over residues 131–144 (ESAASSLSGASEEG). A compositionally biased stretch (basic residues) spans 150 to 166 (KRQKQKGGPGRRRFGKP). A Bipartite nuclear localization signal motif is present at residues 151–164 (RQKQKGGPGRRRFG).

As to quaternary structure, interacts with p53/TP53.

The protein localises to the nucleus. In terms of biological role, promotes the degradation of p53/TP53 protein and inhibits its transactivity. In Bos taurus (Bovine), this protein is Coiled-coil domain-containing protein 106 (CCDC106).